A 647-amino-acid polypeptide reads, in one-letter code: Threonine--tRNA ligase (647 aa).

In terms of domain architecture, TGS spans 1 to 61 (MIKITFPDGA…EEDGSIEIVT (61 aa)). The tract at residues 240–538 (DHRKLGKELD…LIETYKGAFP (299 aa)) is catalytic. 3 residues coordinate Zn(2+): cysteine 334, histidine 385, and histidine 515.

This sequence belongs to the class-II aminoacyl-tRNA synthetase family. Homodimer. Requires Zn(2+) as cofactor.

It localises to the cytoplasm. It catalyses the reaction tRNA(Thr) + L-threonine + ATP = L-threonyl-tRNA(Thr) + AMP + diphosphate + H(+). Its function is as follows. Catalyzes the attachment of threonine to tRNA(Thr) in a two-step reaction: L-threonine is first activated by ATP to form Thr-AMP and then transferred to the acceptor end of tRNA(Thr). Also edits incorrectly charged L-seryl-tRNA(Thr). The polypeptide is Threonine--tRNA ligase (Streptococcus pyogenes serotype M1).